A 351-amino-acid polypeptide reads, in one-letter code: Probable V-type proton ATPase subunit d (351 aa).

The protein belongs to the V-ATPase V0D/AC39 subunit family. As to quaternary structure, V-ATPase is a heteromultimeric enzyme composed of a peripheral catalytic V1 complex (components A to H) attached to an integral membrane V0 proton pore complex (components: a, c, c', c'' and d).

In terms of biological role, subunit of the integral membrane V0 complex of vacuolar ATPase. Vacuolar ATPase is responsible for acidifying a variety of intracellular compartments in eukaryotic cells, thus providing most of the energy required for transport processes in the vacuolar system. This chain is Probable V-type proton ATPase subunit d, found in Oryza sativa subsp. japonica (Rice).